A 331-amino-acid chain; its full sequence is 6-phosphogluconolactonase (331 aa).

This sequence belongs to the cycloisomerase 2 family.

It carries out the reaction 6-phospho-D-glucono-1,5-lactone + H2O = 6-phospho-D-gluconate + H(+). It functions in the pathway carbohydrate degradation; pentose phosphate pathway; D-ribulose 5-phosphate from D-glucose 6-phosphate (oxidative stage): step 2/3. Its function is as follows. Catalyzes the hydrolysis of 6-phosphogluconolactone to 6-phosphogluconate. The polypeptide is 6-phosphogluconolactonase (Salmonella choleraesuis (strain SC-B67)).